The sequence spans 241 residues: Ribonuclease PH (241 aa).

Residues arginine 86 and 124–126 (GTR) each bind phosphate.

It belongs to the RNase PH family. As to quaternary structure, homohexameric ring arranged as a trimer of dimers.

It carries out the reaction tRNA(n+1) + phosphate = tRNA(n) + a ribonucleoside 5'-diphosphate. Phosphorolytic 3'-5' exoribonuclease that plays an important role in tRNA 3'-end maturation. Removes nucleotide residues following the 3'-CCA terminus of tRNAs; can also add nucleotides to the ends of RNA molecules by using nucleoside diphosphates as substrates, but this may not be physiologically important. Probably plays a role in initiation of 16S rRNA degradation (leading to ribosome degradation) during starvation. The polypeptide is Ribonuclease PH (Hamiltonella defensa subsp. Acyrthosiphon pisum (strain 5AT)).